Reading from the N-terminus, the 81-residue chain is Acyl carrier protein (81 aa).

Residues 2 to 80 (SKVDNIEQKV…DVVNYIKEHK (79 aa)) enclose the Carrier domain. Ser-40 carries the O-(pantetheine 4'-phosphoryl)serine modification.

Belongs to the acyl carrier protein (ACP) family. Post-translationally, 4'-phosphopantetheine is transferred from CoA to a specific serine of apo-ACP by AcpS. This modification is essential for activity because fatty acids are bound in thioester linkage to the sulfhydryl of the prosthetic group.

It localises to the cytoplasm. The protein operates within lipid metabolism; fatty acid biosynthesis. Functionally, carrier of the growing fatty acid chain in fatty acid biosynthesis. The sequence is that of Acyl carrier protein from Rickettsia bellii (strain OSU 85-389).